An 851-amino-acid polypeptide reads, in one-letter code: Thrombospondin type-1 domain-containing protein 1 (851 aa).

An N-terminal signal peptide occupies residues 1 to 24; that stretch reads MKPMLKDFSNLLLVVLCDYVLGEA. At 25–412 the chain is on the extracellular side; it reads EYLLLQEPVH…SPQDPVKSNN (388 aa). N-linked (GlcNAc...) asparagine glycosylation is found at Asn53, Asn58, Asn69, Asn110, Asn135, and Asn304. One can recognise a TSP type-1 domain in the interval 339–392; that stretch reads IETWGPWQPWSPCSTTCGDAVRERRRLCVTSFPSRPSCSGMSSETSPCSLEECA. 3 cysteine pairs are disulfide-bonded: Cys351–Cys386, Cys355–Cys391, and Cys366–Cys376. The helical transmembrane segment at 413–433 threads the bilayer; that stretch reads VVTVTGISLCLFIIFATVLIT. Over 434 to 851 the chain is Cytoplasmic; the sequence is LWRRFGRAPK…STLSVEKLVI (418 aa). Ser462 bears the Phosphoserine mark. 3 disordered regions span residues 471 to 516, 626 to 646, and 682 to 777; these read SEPR…ESFQ, KSQIRSTGGRDGSSERCHSRS, and SRMR…SSPI. Basic and acidic residues predominate over residues 685–695; that stretch reads RTWDQMEDRCR. Residues 765–776 show a composition bias toward polar residues; it reads SHRSASRKQSSP.

Part of a complex composed of THSD1, PTK2/FAK1, TLN1 and VCL. Interacts with TLN1. As to expression, expressed in cerebral vascular endothelium.

Its subcellular location is the endosome membrane. The protein localises to the cell junction. The protein resides in the focal adhesion. Is a positive regulator of nascent focal adhesion assembly, involved in the modulation of endothelial cell attachment to the extracellular matrix. The polypeptide is Thrombospondin type-1 domain-containing protein 1 (Thsd1) (Mus musculus (Mouse)).